A 683-amino-acid chain; its full sequence is Methionine--tRNA ligase (683 aa).

Residues 15-25 (YYPSGKLHIGN) carry the 'HIGH' region motif. A 'KMSKS' region motif is present at residues 311-315 (KMSKS). Lys314 is a binding site for ATP. Residues 581–683 (DFDKVELKVA…DNMVNGSLIS (103 aa)) form the tRNA-binding domain.

The protein belongs to the class-I aminoacyl-tRNA synthetase family. MetG type 2B subfamily. In terms of assembly, homodimer.

Its subcellular location is the cytoplasm. It carries out the reaction tRNA(Met) + L-methionine + ATP = L-methionyl-tRNA(Met) + AMP + diphosphate. Functionally, is required not only for elongation of protein synthesis but also for the initiation of all mRNA translation through initiator tRNA(fMet) aminoacylation. This Lactiplantibacillus plantarum (strain ATCC BAA-793 / NCIMB 8826 / WCFS1) (Lactobacillus plantarum) protein is Methionine--tRNA ligase.